The primary structure comprises 236 residues: Uridylate kinase (236 aa).

11–14 serves as a coordination point for ATP; that stretch reads KFSG. Gly-53 is a UMP binding site. ATP contacts are provided by Gly-54 and Arg-58. Residues Asp-73 and 134 to 141 each bind UMP; that span reads TGSPFFTT. ATP contacts are provided by Thr-161, Tyr-167, and Asp-170.

This sequence belongs to the UMP kinase family. In terms of assembly, homohexamer.

It localises to the cytoplasm. It catalyses the reaction UMP + ATP = UDP + ADP. Its pathway is pyrimidine metabolism; CTP biosynthesis via de novo pathway; UDP from UMP (UMPK route): step 1/1. Inhibited by UTP. Functionally, catalyzes the reversible phosphorylation of UMP to UDP. This Hydrogenovibrio crunogenus (strain DSM 25203 / XCL-2) (Thiomicrospira crunogena) protein is Uridylate kinase.